The following is a 727-amino-acid chain: C-terminal-binding protein 1 (727 aa).

The THAP-type zinc finger occupies 5–60 (CGFPNCKFRSRYRGLEDNRHFYRIPKRPLILRQRWLTAIGRTEETVVSQLRICSAH). The disordered stretch occupies residues 64–158 (GEKKEGDIPV…HPPVLPDPQQ (95 aa)). Basic and acidic residues predominate over residues 77 to 94 (TVDKQIKIELPPKESKNS). NAD(+)-binding positions include Tyr251, 331-336 (LGCGRV), Asp355, 388-394 (CNLGDET), 415-417 (TSH), Asp441, and 467-470 (HSAW). Positions 587–613 (ANAQRGSPANRSSRSSPSPHTNKSSVS) are enriched in low complexity. Disordered regions lie at residues 587 to 629 (ANAQ…SPAA) and 652 to 681 (APNG…GDEN).

Belongs to the D-isomer specific 2-hydroxyacid dehydrogenase family. Homodimer.

In terms of biological role, binds DNA and represses gene expression. Plays a role in regulation of life span, possibly by regulating transcription of genes important for lipid metabolism. The sequence is that of C-terminal-binding protein 1 from Caenorhabditis elegans.